Reading from the N-terminus, the 335-residue chain is Putative T-box protein 7 (335 aa).

The segment at residues 73–246 (LWSTFLECGT…NNPFAKGFRN (174 aa)) is a DNA-binding region (T-box).

It localises to the nucleus. The polypeptide is Putative T-box protein 7 (Caenorhabditis elegans).